Reading from the N-terminus, the 184-residue chain is 2-C-methyl-D-erythritol 2,4-cyclodiphosphate synthase (184 aa).

Asp17 and His19 together coordinate a divalent metal cation. Residues 17–19 (DVH) and 47–48 (HS) each bind 4-CDP-2-C-methyl-D-erythritol 2-phosphate. Residue His55 participates in a divalent metal cation binding. 4-CDP-2-C-methyl-D-erythritol 2-phosphate-binding positions include 74 to 78 (FPNTD), Phe152, and Arg155.

It belongs to the IspF family. In terms of assembly, homotrimer. It depends on a divalent metal cation as a cofactor.

It carries out the reaction 4-CDP-2-C-methyl-D-erythritol 2-phosphate = 2-C-methyl-D-erythritol 2,4-cyclic diphosphate + CMP. The protein operates within isoprenoid biosynthesis; isopentenyl diphosphate biosynthesis via DXP pathway; isopentenyl diphosphate from 1-deoxy-D-xylulose 5-phosphate: step 4/6. Functionally, involved in the biosynthesis of isopentenyl diphosphate (IPP) and dimethylallyl diphosphate (DMAPP), two major building blocks of isoprenoid compounds. Catalyzes the conversion of 4-diphosphocytidyl-2-C-methyl-D-erythritol 2-phosphate (CDP-ME2P) to 2-C-methyl-D-erythritol 2,4-cyclodiphosphate (ME-CPP) with a corresponding release of cytidine 5-monophosphate (CMP). The polypeptide is 2-C-methyl-D-erythritol 2,4-cyclodiphosphate synthase (Anaplasma marginale (strain St. Maries)).